The primary structure comprises 383 residues: Protein delta homolog 2 (383 aa).

A signal peptide spans 1–26 (MPSGCRCLHLVCLLCILGAPGQPVRA). EGF-like domains are found at residues 27–58 (DDCSSHCDLAHGCCAPDGSCRCDPGWEGLHCE), 62–89 (RMPGCQHGTCHQPWQCICHSGWAGKFCD), 91–129 (DEHICTTQSPCQNGGQCMYDGGGEYHCVCLPGFHGRDCE), and 131–172 (KAGP…ARCE). The Extracellular segment spans residues 27–306 (DDCSSHCDLA…RQEAGLGEPS (280 aa)). Cystine bridges form between C29–C40, C33–C46, C48–C57, C66–C71, C79–C88, C95–C107, C101–C117, C119–C128, C135–C148, C142–C160, C162–C171, C178–C189, C183–C198, C200–C209, C216–C227, C221–C236, and C238–C247. Residue N157 is glycosylated (N-linked (GlcNAc...) asparagine). An EGF-like 5; calcium-binding domain is found at 174-210 (NVDDCLMRPCANGATCLDGINRFSCLCPEGFAGRFCT). The region spanning 212–248 (NLDDCASRPCQRGARCRDRVHDFDCLCPSGYGGKTCE) is the EGF-like 6; calcium-binding domain. A helical membrane pass occupies residues 307 to 327 (LVALVVFGALTAALVLATVLL). Residues 328–383 (TLRAWRRGVCPPGPCCYPAPHYAPACQDQECQVSMLPAGLPLPRDLPPEPGKTTAL) are Cytoplasmic-facing.

The protein localises to the membrane. Functionally, regulates adipogenesis. The chain is Protein delta homolog 2 (DLK2) from Homo sapiens (Human).